Reading from the N-terminus, the 151-residue chain is Large ribosomal subunit protein bL9 (151 aa).

The protein belongs to the bacterial ribosomal protein bL9 family.

Functionally, binds to the 23S rRNA. The chain is Large ribosomal subunit protein bL9 from Chlorobium chlorochromatii (strain CaD3).